We begin with the raw amino-acid sequence, 302 residues long: N-acetyl-D-glucosamine kinase (302 aa).

ATP is bound by residues 4–11 (GFDVGGTK) and 133–140 (GFGGGLVF). The Zn(2+) site is built by histidine 157, cysteine 177, cysteine 179, and cysteine 184.

This sequence belongs to the ROK (NagC/XylR) family. NagK subfamily.

It catalyses the reaction N-acetyl-D-glucosamine + ATP = N-acetyl-D-glucosamine 6-phosphate + ADP + H(+). Its pathway is cell wall biogenesis; peptidoglycan recycling. Its function is as follows. Catalyzes the phosphorylation of N-acetyl-D-glucosamine (GlcNAc) derived from cell-wall degradation, yielding GlcNAc-6-P. This chain is N-acetyl-D-glucosamine kinase, found in Aliivibrio salmonicida (strain LFI1238) (Vibrio salmonicida (strain LFI1238)).